The sequence spans 74 residues: Small ribosomal subunit protein bS20c (74 aa).

It belongs to the bacterial ribosomal protein bS20 family.

The protein resides in the plastid. It localises to the chloroplast. Functionally, binds directly to 16S ribosomal RNA. The polypeptide is Small ribosomal subunit protein bS20c (Cyanidioschyzon merolae (strain NIES-3377 / 10D) (Unicellular red alga)).